Consider the following 343-residue polypeptide: ATP-dependent 6-phosphofructokinase (343 aa).

ATP is bound by residues G10 and 103-106 (GEGT). A Mg(2+)-binding site is contributed by E104. Residues 126–128 (TID), R163, 170–172 (MGR), E223, R267, and 273–276 (HVQR) each bind substrate. Catalysis depends on D128, which acts as the Proton acceptor.

It belongs to the phosphofructokinase type A (PFKA) family. Mixed-substrate PFK group III subfamily. As to quaternary structure, homodimer or homotetramer. It depends on Mg(2+) as a cofactor.

It localises to the cytoplasm. The catalysed reaction is beta-D-fructose 6-phosphate + ATP = beta-D-fructose 1,6-bisphosphate + ADP + H(+). It participates in carbohydrate degradation; glycolysis; D-glyceraldehyde 3-phosphate and glycerone phosphate from D-glucose: step 3/4. Functionally, catalyzes the phosphorylation of D-fructose 6-phosphate to fructose 1,6-bisphosphate by ATP, the first committing step of glycolysis. The chain is ATP-dependent 6-phosphofructokinase from Mycobacterium leprae (strain TN).